Reading from the N-terminus, the 222-residue chain is MMSLRIYYGGTFDPVHLGHLAIARAARDELQVAVRMLPAADPPHRAVPGATADQRFTMLSLAIGDEPGLLLDHRELDRAIRFPGRPSYTVDTLRELRGELGPSRPLAWLVGADSLLGLTRWHEWEALFGLAHFVVAERPGSPLQASVDGELGRALEGRWADNEQALFASPAGRILRLHHPLREESASAVRAQIAAGGPWRALLPPAVADYVAAHGLYRSPTP.

It belongs to the NadD family.

The catalysed reaction is nicotinate beta-D-ribonucleotide + ATP + H(+) = deamido-NAD(+) + diphosphate. It participates in cofactor biosynthesis; NAD(+) biosynthesis; deamido-NAD(+) from nicotinate D-ribonucleotide: step 1/1. In terms of biological role, catalyzes the reversible adenylation of nicotinate mononucleotide (NaMN) to nicotinic acid adenine dinucleotide (NaAD). The polypeptide is Probable nicotinate-nucleotide adenylyltransferase (Stenotrophomonas maltophilia (strain K279a)).